Here is a 156-residue protein sequence, read N- to C-terminus: CKLF-like MARVEL transmembrane domain-containing protein 5 (156 aa).

One can recognise an MARVEL domain in the interval 29-146 (FLSSLKGILL…DAFKIYRTEL (118 aa)). A run of 4 helical transmembrane segments spans residues 35–55 (GILLETELALTFIIFICFTAS), 56–76 (ISAYMAAALLEFLITLAFLFL), 93–113 (LDFLRCLSAIVIFLVVSFAAV), and 119–139 (AAIAAFVFGIILVSVFAYDAF).

This sequence belongs to the chemokine-like factor family.

It localises to the membrane. The sequence is that of CKLF-like MARVEL transmembrane domain-containing protein 5 (Cmtm5) from Mus musculus (Mouse).